Here is a 263-residue protein sequence, read N- to C-terminus: Endonuclease 8 (263 aa).

P2 acts as the Schiff-base intermediate with DNA in catalysis. The active-site Proton donor is E3. K53 functions as the Proton donor; for beta-elimination activity in the catalytic mechanism. DNA contacts are provided by Q70, R125, and N169. The segment at 229–263 adopts an FPG-type zinc-finger fold; the sequence is KVFHRDGEACERCGGIIEKTTLSSRPFYWCPHCQK. The active-site Proton donor; for delta-elimination activity is the R253.

This sequence belongs to the FPG family. Requires Zn(2+) as cofactor.

The catalysed reaction is 2'-deoxyribonucleotide-(2'-deoxyribose 5'-phosphate)-2'-deoxyribonucleotide-DNA = a 3'-end 2'-deoxyribonucleotide-(2,3-dehydro-2,3-deoxyribose 5'-phosphate)-DNA + a 5'-end 5'-phospho-2'-deoxyribonucleoside-DNA + H(+). Its function is as follows. Involved in base excision repair of DNA damaged by oxidation or by mutagenic agents. Acts as a DNA glycosylase that recognizes and removes damaged bases. Has a preference for oxidized pyrimidines, such as thymine glycol, 5,6-dihydrouracil and 5,6-dihydrothymine. Has AP (apurinic/apyrimidinic) lyase activity and introduces nicks in the DNA strand. Cleaves the DNA backbone by beta-delta elimination to generate a single-strand break at the site of the removed base with both 3'- and 5'-phosphates. The protein is Endonuclease 8 of Salmonella dublin (strain CT_02021853).